We begin with the raw amino-acid sequence, 342 residues long: Dihydroorotate dehydrogenase (quinone) (342 aa).

Residues 61 to 65 (AGLDK) and Thr85 contribute to the FMN site. Lys65 is a binding site for substrate. Position 110–114 (110–114 (NRMGF)) interacts with substrate. Positions 138 and 171 each coordinate FMN. Asn171 contributes to the substrate binding site. Ser174 functions as the Nucleophile in the catalytic mechanism. Residue Asn176 coordinates substrate. FMN is bound by residues Lys216 and Thr244. Position 245-246 (245-246 (NT)) interacts with substrate. FMN-binding positions include Gly267, Gly296, and 317-318 (YS).

Belongs to the dihydroorotate dehydrogenase family. Type 2 subfamily. As to quaternary structure, monomer. FMN is required as a cofactor.

Its subcellular location is the cell membrane. It carries out the reaction (S)-dihydroorotate + a quinone = orotate + a quinol. It participates in pyrimidine metabolism; UMP biosynthesis via de novo pathway; orotate from (S)-dihydroorotate (quinone route): step 1/1. Functionally, catalyzes the conversion of dihydroorotate to orotate with quinone as electron acceptor. This chain is Dihydroorotate dehydrogenase (quinone), found in Pseudomonas aeruginosa (strain LESB58).